We begin with the raw amino-acid sequence, 288 residues long: tRNA (guanine-N(1)-)-methyltransferase (288 aa).

Residues 82 to 105 (ATDAVDTSDPGDSAAPDSSAPSGA) form a disordered region. A compositionally biased stretch (low complexity) spans 89–105 (SDPGDSAAPDSSAPSGA). Residues glycine 137 and 162 to 167 (IGDYVL) each bind S-adenosyl-L-methionine.

The protein belongs to the RNA methyltransferase TrmD family. Homodimer.

It is found in the cytoplasm. It catalyses the reaction guanosine(37) in tRNA + S-adenosyl-L-methionine = N(1)-methylguanosine(37) in tRNA + S-adenosyl-L-homocysteine + H(+). Functionally, specifically methylates guanosine-37 in various tRNAs. The chain is tRNA (guanine-N(1)-)-methyltransferase from Bifidobacterium longum (strain DJO10A).